Reading from the N-terminus, the 88-residue chain is Selenoprotein W (88 aa).

Positions 10 to 13 form a cross-link, cysteinyl-selenocysteine (Cys-Sec); redox-active; it reads CGAU. A non-standard amino acid (selenocysteine) is located at residue Sec13. At Cys37 the chain carries S-glutathionyl cysteine.

The protein belongs to the SelWTH family. Selenoprotein W subfamily. In terms of assembly, interacts with DPYSL2, PRDX1, YWHAB, YWHAG, HSP70 and HSP90. As to expression, in the embryo, expressed in the developing nervous system and in mesoderm-derived tissues such as heart and limbs. In the adult, predominantly expressed in brain, skeletal muscle and heart.

Its subcellular location is the cytoplasm. Its function is as follows. Plays a role as a glutathione (GSH)-dependent antioxidant. May be involved in a redox-related process. May play a role in the myopathies of selenium deficiency. In Mus musculus (Mouse), this protein is Selenoprotein W.